We begin with the raw amino-acid sequence, 487 residues long: GTPase Der (487 aa).

EngA-type G domains follow at residues 3 to 166 and 199 to 372; these read PVVA…AEAM and IKLA…DSAT. Residues 9-16, 56-60, 118-121, 205-212, 252-256, and 317-320 each bind GTP; these read GRPNVGKS, DTGGI, NKID, GKPNVGKS, DTAGV, and NKWD. The region spanning 373–457 is the KH-like domain; the sequence is RRVSTSMLTR…PIQLRFQEGD (85 aa).

This sequence belongs to the TRAFAC class TrmE-Era-EngA-EngB-Septin-like GTPase superfamily. EngA (Der) GTPase family. In terms of assembly, associates with the 50S ribosomal subunit.

GTPase that plays an essential role in the late steps of ribosome biogenesis. The polypeptide is GTPase Der (Shewanella oneidensis (strain ATCC 700550 / JCM 31522 / CIP 106686 / LMG 19005 / NCIMB 14063 / MR-1)).